The chain runs to 320 residues: Arginine/serine-rich protein 1 (320 aa).

The segment covering 1 to 22 (MKTEASPGRLHEDVKLIFDKKA) has biased composition (basic and acidic residues). Disordered regions lie at residues 1 to 180 (MKTE…SRER) and 215 to 299 (LKEM…ADIV). Composition is skewed to low complexity over residues 24-48 (SGRS…SRGS) and 56-74 (TSSS…SNSR). Basic residues-rich tracts occupy residues 75–102 (SRSR…RARS), 114–158 (RRRH…RYRC), and 166–175 (RSPRPYRSRS). A phosphoserine mark is found at Ser135 and Ser137. A compositionally biased stretch (basic and acidic residues) spans 215-238 (LKEMEQQEERKRRSSSDEEERVRV). A compositionally biased stretch (polar residues) spans 271–293 (VFSNNNAIAKPSSSPTLSDSKVT).

The protein belongs to the RSRP family. Post-translationally, phosphorylated. Phosphorylation at Ser-135 and Ser-137 mediates the interaction with spliceosome proteins.

The protein resides in the nucleus. Functionally, probably acts as a spliceosomal factor that contributes to spliceosome assembly and regulates the isoform switching of proteins such as PARP6. This Danio rerio (Zebrafish) protein is Arginine/serine-rich protein 1 (rsrp1).